The chain runs to 496 residues: Glutamate--tRNA ligase 2 (496 aa).

Residues 13–23 carry the 'HIGH' region motif; it reads PSPTGRLHVGG. The 'KMSKS' region signature appears at 255–259; sequence KLSKR. Residue K258 coordinates ATP.

This sequence belongs to the class-I aminoacyl-tRNA synthetase family. Glutamate--tRNA ligase type 1 subfamily. As to quaternary structure, monomer.

The protein resides in the cytoplasm. It catalyses the reaction tRNA(Glu) + L-glutamate + ATP = L-glutamyl-tRNA(Glu) + AMP + diphosphate. Catalyzes the attachment of glutamate to tRNA(Glu) in a two-step reaction: glutamate is first activated by ATP to form Glu-AMP and then transferred to the acceptor end of tRNA(Glu). The sequence is that of Glutamate--tRNA ligase 2 from Rubrobacter xylanophilus (strain DSM 9941 / JCM 11954 / NBRC 16129 / PRD-1).